Reading from the N-terminus, the 303-residue chain is ATP synthase subunit a (303 aa).

A run of 6 helical transmembrane segments spans residues 59–79 (HTVM…IWGN), 122–142 (FLLT…VPWM), 148–168 (NLAV…VAGI), 181–201 (TGGV…LGLF), 220–240 (IVYF…VAAV), and 244–264 (FAFA…YVFA). Basic and acidic residues predominate over residues 281-290 (HDDHGHDHPE). The tract at residues 281–303 (HDDHGHDHPEAGPSHDQGKAHHA) is disordered.

This sequence belongs to the ATPase A chain family. In terms of assembly, F-type ATPases have 2 components, CF(1) - the catalytic core - and CF(0) - the membrane proton channel. CF(1) has five subunits: alpha(3), beta(3), gamma(1), delta(1), epsilon(1). CF(0) has three main subunits: a(1), b(2) and c(9-12). The alpha and beta chains form an alternating ring which encloses part of the gamma chain. CF(1) is attached to CF(0) by a central stalk formed by the gamma and epsilon chains, while a peripheral stalk is formed by the delta and b chains.

The protein resides in the cell inner membrane. Key component of the proton channel; it plays a direct role in the translocation of protons across the membrane. The polypeptide is ATP synthase subunit a (Myxococcus xanthus (strain DK1622)).